A 507-amino-acid polypeptide reads, in one-letter code: Keratin, type II cuticular Hb5 (507 aa).

The tract at residues 1–123 (MSCRSYRISS…PNAQCVKQEE (123 aa)) is head. The region spanning 123–434 (EKEQIKSLNS…RLLEGEEHRL (312 aa)) is the IF rod domain. Residues 124–158 (KEQIKSLNSRFAAFIDKVRFLEQQNKLLETKWQFY) are coil 1A. A linker 1 region spans residues 159–168 (QNQRCCESNL). Residues 169–269 (EPLFSGYIET…YEEEIRVLQA (101 aa)) form a coil 1B region. Residue Lys-229 forms a Glycyl lysine isopeptide (Lys-Gly) (interchain with G-Cter in SUMO1) linkage. The segment at 270-286 (HISDTSVIVKMDNSRDL) is linker 12. The interval 287–430 (NMDCIIAEIK…ATYRRLLEGE (144 aa)) is coil 2. The tract at residues 431–507 (EHRLCEGVGS…CGSSRSVRFA (77 aa)) is tail.

The protein belongs to the intermediate filament family. As to quaternary structure, heterotetramer of two type I and two type II keratins. In terms of tissue distribution, synthesis occurs immediately above a small population of matrix cells at the base of the hair bulb and the trichocytes lining the dermal papilla and extends upward through the matrix and ends in the lower part of the cortex of the hair shaft.

This chain is Keratin, type II cuticular Hb5 (KRT85), found in Homo sapiens (Human).